A 185-amino-acid polypeptide reads, in one-letter code: Ribosome-recycling factor (185 aa).

This sequence belongs to the RRF family.

The protein resides in the cytoplasm. Its function is as follows. Responsible for the release of ribosomes from messenger RNA at the termination of protein biosynthesis. May increase the efficiency of translation by recycling ribosomes from one round of translation to another. In Hamiltonella defensa subsp. Acyrthosiphon pisum (strain 5AT), this protein is Ribosome-recycling factor.